The sequence spans 667 residues: tRNA 5-methylaminomethyl-2-thiouridine biosynthesis bifunctional protein MnmC (667 aa).

Polar residues predominate over residues 1–12; sequence MSKQQAPNTTGI. The interval 1 to 20 is disordered; sequence MSKQQAPNTTGIGTADLQWH. Residues 1-240 are tRNA (mnm(5)s(2)U34)-methyltransferase; it reads MSKQQAPNTT…KRECLRGVLE (240 aa). The segment at 268–667 is FAD-dependent cmnm(5)s(2)U34 oxidoreductase; that stretch reads IGAGIAGAAC…LVRSLKKPPL (400 aa).

It in the N-terminal section; belongs to the methyltransferase superfamily. tRNA (mnm(5)s(2)U34)-methyltransferase family. The protein in the C-terminal section; belongs to the DAO family. FAD serves as cofactor.

It is found in the cytoplasm. It carries out the reaction 5-aminomethyl-2-thiouridine(34) in tRNA + S-adenosyl-L-methionine = 5-methylaminomethyl-2-thiouridine(34) in tRNA + S-adenosyl-L-homocysteine + H(+). In terms of biological role, catalyzes the last two steps in the biosynthesis of 5-methylaminomethyl-2-thiouridine (mnm(5)s(2)U) at the wobble position (U34) in tRNA. Catalyzes the FAD-dependent demodification of cmnm(5)s(2)U34 to nm(5)s(2)U34, followed by the transfer of a methyl group from S-adenosyl-L-methionine to nm(5)s(2)U34, to form mnm(5)s(2)U34. The polypeptide is tRNA 5-methylaminomethyl-2-thiouridine biosynthesis bifunctional protein MnmC (Magnetococcus marinus (strain ATCC BAA-1437 / JCM 17883 / MC-1)).